The sequence spans 190 residues: Potassium-transporting ATPase KdpC subunit (190 aa).

Residues 10-30 (TFLFLLLITGGVYPLLTTALG) form a helical membrane-spanning segment.

The protein belongs to the KdpC family. The system is composed of three essential subunits: KdpA, KdpB and KdpC.

It is found in the cell inner membrane. Part of the high-affinity ATP-driven potassium transport (or Kdp) system, which catalyzes the hydrolysis of ATP coupled with the electrogenic transport of potassium into the cytoplasm. This subunit acts as a catalytic chaperone that increases the ATP-binding affinity of the ATP-hydrolyzing subunit KdpB by the formation of a transient KdpB/KdpC/ATP ternary complex. The protein is Potassium-transporting ATPase KdpC subunit of Shigella flexneri serotype 5b (strain 8401).